We begin with the raw amino-acid sequence, 378 residues long: Chaperone protein DnaJ (378 aa).

One can recognise a J domain in the interval 5–70; sequence DFYEILGVSK…EKRSAYDRMG (66 aa). The CR-type zinc-finger motif lies at 137–215; it reads GCKKEISFTA…CHGNGVKDKS (79 aa). Zn(2+) is bound by residues cysteine 150, cysteine 153, cysteine 167, cysteine 170, cysteine 189, cysteine 192, cysteine 203, and cysteine 206. CXXCXGXG motif repeat units lie at residues 150–157, 167–174, 189–196, and 203–210; these read CDTCDGKG, CQTCHGQG, CPHCGGTG, and CSDCHGNG.

It belongs to the DnaJ family. Homodimer. The cofactor is Zn(2+).

It localises to the cytoplasm. In terms of biological role, participates actively in the response to hyperosmotic and heat shock by preventing the aggregation of stress-denatured proteins and by disaggregating proteins, also in an autonomous, DnaK-independent fashion. Unfolded proteins bind initially to DnaJ; upon interaction with the DnaJ-bound protein, DnaK hydrolyzes its bound ATP, resulting in the formation of a stable complex. GrpE releases ADP from DnaK; ATP binding to DnaK triggers the release of the substrate protein, thus completing the reaction cycle. Several rounds of ATP-dependent interactions between DnaJ, DnaK and GrpE are required for fully efficient folding. Also involved, together with DnaK and GrpE, in the DNA replication of plasmids through activation of initiation proteins. In Psychrobacter cryohalolentis (strain ATCC BAA-1226 / DSM 17306 / VKM B-2378 / K5), this protein is Chaperone protein DnaJ.